A 317-amino-acid chain; its full sequence is Annexin D2 (317 aa).

Ala-2 is modified (N-acetylalanine). Annexin repeat units lie at residues 11-82 (PLPE…LWTL), 83-154 (DPPE…PLVS), 166-238 (MLAR…AVIT), and 242-313 (YPEK…ALLG). Ca(2+) contacts are provided by Phe-24, Gly-26, Gly-28, and Glu-68. At Ser-95 the chain carries Phosphoserine. Thr-100 and Thr-112 each carry phosphothreonine. A Phosphotyrosine modification is found at Tyr-129. Ca(2+) contacts are provided by Ile-255 and Gly-259. At Tyr-284 the chain carries Phosphotyrosine. Ser-289 is modified (phosphoserine). The Ca(2+) site is built by Asp-299, Thr-300, and Glu-305.

This sequence belongs to the annexin (TC 1.A.31.1) family. As to expression, expressed mainly in roots and flowers. Low in stems and bearly detectable in leaves.

Its subcellular location is the cytoplasm. The protein localises to the cytosol. It is found in the membrane. Functionally, may mediate regulated, targeted secretion of Golgi-derived vesicles during seedling development. This chain is Annexin D2 (ANN2), found in Arabidopsis thaliana (Mouse-ear cress).